Here is a 103-residue protein sequence, read N- to C-terminus: Cystatin-A1 (103 aa).

A Secondary area of contact motif is present at residues 51–55 (QVVAG).

Belongs to the cystatin family.

The protein localises to the cytoplasm. Its function is as follows. This is an intracellular thiol proteinase inhibitor. This is Cystatin-A1 from Sus scrofa (Pig).